Here is a 73-residue protein sequence, read N- to C-terminus: Translation initiation factor IF-1 (73 aa).

Residues 1–73 (MAKKQGAIEI…TRGRIVYRYK (73 aa)) form the S1-like domain.

Belongs to the IF-1 family. In terms of assembly, component of the 30S ribosomal translation pre-initiation complex which assembles on the 30S ribosome in the order IF-2 and IF-3, IF-1 and N-formylmethionyl-tRNA(fMet); mRNA recruitment can occur at any time during PIC assembly.

The protein localises to the cytoplasm. One of the essential components for the initiation of protein synthesis. Stabilizes the binding of IF-2 and IF-3 on the 30S subunit to which N-formylmethionyl-tRNA(fMet) subsequently binds. Helps modulate mRNA selection, yielding the 30S pre-initiation complex (PIC). Upon addition of the 50S ribosomal subunit IF-1, IF-2 and IF-3 are released leaving the mature 70S translation initiation complex. The chain is Translation initiation factor IF-1 from Streptomyces coelicolor (strain ATCC BAA-471 / A3(2) / M145).